The sequence spans 294 residues: Indole-3-glycerol phosphate synthase (294 aa).

This sequence belongs to the TrpC family.

The catalysed reaction is 1-(2-carboxyphenylamino)-1-deoxy-D-ribulose 5-phosphate + H(+) = (1S,2R)-1-C-(indol-3-yl)glycerol 3-phosphate + CO2 + H2O. Its pathway is amino-acid biosynthesis; L-tryptophan biosynthesis; L-tryptophan from chorismate: step 4/5. The chain is Indole-3-glycerol phosphate synthase from Synechococcus sp. (strain CC9902).